A 347-amino-acid chain; its full sequence is Cell division protein FtsQ (347 aa).

Residues 1–55 (MARNGNPQFPDERSTATRAKATEPEELDDRFSDLEPEEDSPFLRSQKRVPVRRGP) form a disordered region. Residues 1-66 (MARNGNPQFP…PSKKAANRVK (66 aa)) lie on the Cytoplasmic side of the membrane. The segment covering 10-33 (PDERSTATRAKATEPEELDDRFSD) has biased composition (basic and acidic residues). Residues 67-87 (IALIVLGVLVVIGGVWMALSA) traverse the membrane as a helical segment. At 88-347 (YGEHSWRFRL…PTAHTSGRRH (260 aa)) the chain is on the periplasmic side. The POTRA domain maps to 98–166 (ESSDSIEVGG…DRIRVQVTER (69 aa)). The disordered stretch occupies residues 308–347 (DSHPSAAKPTAPAVAPAVEKPAVAKPAVAKPTAHTSGRRH). Over residues 313–340 (AAKPTAPAVAPAVEKPAVAKPAVAKPTA) the composition is skewed to low complexity.

It belongs to the FtsQ/DivIB family. FtsQ subfamily.

It is found in the cell inner membrane. Essential cell division protein. In Koribacter versatilis (strain Ellin345), this protein is Cell division protein FtsQ.